We begin with the raw amino-acid sequence, 278 residues long: 4-deoxy-L-threo-5-hexosulose-uronate ketol-isomerase (278 aa).

Zn(2+) is bound by residues H196, H198, E203, and H245.

Belongs to the KduI family. It depends on Zn(2+) as a cofactor.

The enzyme catalyses 5-dehydro-4-deoxy-D-glucuronate = 3-deoxy-D-glycero-2,5-hexodiulosonate. It functions in the pathway glycan metabolism; pectin degradation; 2-dehydro-3-deoxy-D-gluconate from pectin: step 4/5. Its function is as follows. Catalyzes the isomerization of 5-dehydro-4-deoxy-D-glucuronate to 3-deoxy-D-glycero-2,5-hexodiulosonate. In Shigella flexneri serotype 5b (strain 8401), this protein is 4-deoxy-L-threo-5-hexosulose-uronate ketol-isomerase.